Consider the following 336-residue polypeptide: Ventral anterior homeobox 1 (336 aa).

A compositionally biased stretch (basic and acidic residues) spans 1–34 (MFGKTDKMDVRCHSDTEAARVSKNAHKESREIKG). 2 disordered regions span residues 1 to 39 (MFGK…EGSL) and 50 to 69 (AFSA…NSSA). A DNA-binding region (homeobox) is located at residues 100 to 159 (PKRTRTSFTAEQLYRLEMEFQRCQYVVGRERTELARQLNLSETQVKVWFQNRRTKQKKDQ). The segment covering 236–250 (PGPAGAASQHPPAVG) has biased composition (low complexity). 2 disordered regions span residues 236-267 (PGPA…HAGA) and 316-336 (SAFE…KALD). Over residues 325-336 (NNKEGAEKKALD) the composition is skewed to basic and acidic residues.

This sequence belongs to the EMX homeobox family.

It is found in the nucleus. Transcription factor that may function in dorsoventral specification of the forebrain. Required for axon guidance and major tract formation in the developing forebrain. May contribute to the differentiation of the neuroretina, pigmented epithelium and optic stalk. The sequence is that of Ventral anterior homeobox 1 (Vax1) from Rattus norvegicus (Rat).